A 756-amino-acid chain; its full sequence is Polyribonucleotide nucleotidyltransferase (756 aa).

The Mg(2+) site is built by aspartate 547 and aspartate 553. The KH domain occupies proline 613 to valine 672. One can recognise an S1 motif domain in the interval glycine 684 to valine 753.

The protein belongs to the polyribonucleotide nucleotidyltransferase family. The cofactor is Mg(2+).

It is found in the cytoplasm. The enzyme catalyses RNA(n+1) + phosphate = RNA(n) + a ribonucleoside 5'-diphosphate. In terms of biological role, involved in mRNA degradation. Catalyzes the phosphorolysis of single-stranded polyribonucleotides processively in the 3'- to 5'-direction. The polypeptide is Polyribonucleotide nucleotidyltransferase (Corynebacterium aurimucosum (strain ATCC 700975 / DSM 44827 / CIP 107346 / CN-1) (Corynebacterium nigricans)).